Reading from the N-terminus, the 263-residue chain is UPF0328 protein ECU08_2060 (263 aa).

It belongs to the UPF0328 family.

In Encephalitozoon cuniculi (strain GB-M1) (Microsporidian parasite), this protein is UPF0328 protein ECU08_2060.